We begin with the raw amino-acid sequence, 95 residues long: MRHYELMVILDPSLDERTVAPSLDTFLNVVRQDGGKIDKVDVWGKRRLAYEILKHSEGIYAVIDISATPATVAELDRQLGLNESVLRTKVLRHNK.

The protein belongs to the bacterial ribosomal protein bS6 family.

Binds together with bS18 to 16S ribosomal RNA. The protein is Small ribosomal subunit protein bS6 of Rhodococcus jostii (strain RHA1).